We begin with the raw amino-acid sequence, 162 residues long: Corticoliberin (162 aa).

A signal peptide spans 1 to 24 (MKLNFLVTTVALLVAFPPPYECRA). A propeptide spanning residues 25–119 (IEGSSNQPAT…ALDSVERERR (95 aa)) is cleaved from the precursor. Phenylalanine 160 carries the post-translational modification Phenylalanine amide.

This sequence belongs to the sauvagine/corticotropin-releasing factor/urotensin I family.

Its subcellular location is the secreted. This hormone from hypothalamus regulates the release of corticotropin from pituitary gland. This Carassius auratus (Goldfish) protein is Corticoliberin (crh).